A 671-amino-acid chain; its full sequence is DNA ligase (671 aa).

Residues Asp-32–Asp-36, Ser-81–Leu-82, and Glu-113 contribute to the NAD(+) site. The N6-AMP-lysine intermediate role is filled by Lys-115. Residues Arg-136, Glu-173, Lys-290, and Lys-314 each contribute to the NAD(+) site. 4 residues coordinate Zn(2+): Cys-408, Cys-411, Cys-426, and Cys-432. A BRCT domain is found at Glu-593 to Glu-671.

Belongs to the NAD-dependent DNA ligase family. LigA subfamily. Mg(2+) is required as a cofactor. Mn(2+) serves as cofactor.

It catalyses the reaction NAD(+) + (deoxyribonucleotide)n-3'-hydroxyl + 5'-phospho-(deoxyribonucleotide)m = (deoxyribonucleotide)n+m + AMP + beta-nicotinamide D-nucleotide.. DNA ligase that catalyzes the formation of phosphodiester linkages between 5'-phosphoryl and 3'-hydroxyl groups in double-stranded DNA using NAD as a coenzyme and as the energy source for the reaction. It is essential for DNA replication and repair of damaged DNA. This Klebsiella pneumoniae subsp. pneumoniae (strain ATCC 700721 / MGH 78578) protein is DNA ligase.